The chain runs to 61 residues: Large ribosomal subunit protein bL28 (61 aa).

This sequence belongs to the bacterial ribosomal protein bL28 family.

This is Large ribosomal subunit protein bL28 (rpmB) from Geobacillus stearothermophilus (Bacillus stearothermophilus).